The primary structure comprises 290 residues: NH(3)-dependent NAD(+) synthetase (290 aa).

33-40 (GVSGGVDS) lines the ATP pocket. A Mg(2+)-binding site is contributed by D39. Position 154 (R154) interacts with deamido-NAD(+). T174 provides a ligand contact to ATP. E179 serves as a coordination point for Mg(2+). Residues K187 and D194 each coordinate deamido-NAD(+). Residues K203 and S225 each coordinate ATP.

Belongs to the NAD synthetase family. Homodimer.

The enzyme catalyses deamido-NAD(+) + NH4(+) + ATP = AMP + diphosphate + NAD(+) + H(+). The protein operates within cofactor biosynthesis; NAD(+) biosynthesis; NAD(+) from deamido-NAD(+) (ammonia route): step 1/1. Its function is as follows. Catalyzes the ATP-dependent amidation of deamido-NAD to form NAD. Uses ammonia as a nitrogen source. This is NH(3)-dependent NAD(+) synthetase from Thermotoga neapolitana (strain ATCC 49049 / DSM 4359 / NBRC 107923 / NS-E).